The following is a 152-amino-acid chain: MEQYKIWVDADACPNPIKEMLFRAAERKSVPLVLVANQMLRVPPSPYISQVRVGSGFDVADQYIVDHVEATHLVITADIPLAAHVIEKGALALNPRGELYTTDNIRQKLTMRDFMEDLRSSGVHTGGPDAFSAADKQAFANSLDKWLVRVKR.

This sequence belongs to the UPF0178 family.

This is UPF0178 protein Shewmr7_1635 from Shewanella sp. (strain MR-7).